Consider the following 852-residue polypeptide: Translation initiation factor IF-2 (852 aa).

The interval 1 to 240 is disordered; the sequence is MEDKNKTIKE…KTSSDKRDFS (240 aa). Over residues 78–90 the composition is skewed to basic and acidic residues; sequence KEVKYEESSRKQD. A compositionally biased stretch (polar residues) spans 106–120; the sequence is VRPSGDSSYPVSRSP. Residues 150 to 200 show a composition bias toward gly residues; the sequence is RGPGQGGGYQGNRGPGQGGGYQGNRGPGQQTGPGNRFGGSGPGNRSGGPGG. Residues 227 to 240 are compositionally biased toward basic and acidic residues; the sequence is HDKEKTSSDKRDFS. Residues 347–516 form the tr-type G domain; sequence NRPPVVTIMG…LLQAEVMDLK (170 aa). The tract at residues 356-363 is G1; it reads GHVDHGKT. 356 to 363 provides a ligand contact to GTP; the sequence is GHVDHGKT. Residues 381 to 385 form a G2 region; the sequence is GITQH. The G3 stretch occupies residues 402–405; it reads DTPG. Residues 402 to 406 and 456 to 459 contribute to the GTP site; these read DTPGH and NKID. The G4 stretch occupies residues 456-459; the sequence is NKID. A G5 region spans residues 492 to 494; that stretch reads SAR.

The protein belongs to the TRAFAC class translation factor GTPase superfamily. Classic translation factor GTPase family. IF-2 subfamily.

The protein resides in the cytoplasm. Its function is as follows. One of the essential components for the initiation of protein synthesis. Protects formylmethionyl-tRNA from spontaneous hydrolysis and promotes its binding to the 30S ribosomal subunits. Also involved in the hydrolysis of GTP during the formation of the 70S ribosomal complex. This is Translation initiation factor IF-2 from Leptospira borgpetersenii serovar Hardjo-bovis (strain JB197).